The following is a 150-amino-acid chain: Protein ORF35 (150 aa).

This Homo sapiens (Human) protein is Protein ORF35 (ORF35).